Consider the following 492-residue polypeptide: 5-taurinomethyluridine-[tRNA] synthase subunit GTPB3, mitochondrial (492 aa).

The N-terminal 20 residues, 1–20 (MWRGLSALVTRPASAPLRLC), are a transit peptide targeting the mitochondrion. Residues Arg-52, Glu-112, and Lys-152 each contribute to the 5,10-methylenetetrahydrofolate site. In terms of domain architecture, TrmE-type G spans 249–416 (GANVVVAGPP…LLQALKTELA (168 aa)). Residues 256–263 (GPPNAGKS), 282–286 (GTTRD), 303–306 (DTAG), and 374–377 (NKSD) each bind GTP. Asn-259 is a K(+) binding site. Mg(2+)-binding residues include Ser-263 and Thr-284. Residue Lys-492 coordinates 5,10-methylenetetrahydrofolate.

The protein belongs to the TRAFAC class TrmE-Era-EngA-EngB-Septin-like GTPase superfamily. TrmE GTPase family. As to quaternary structure, homodimer; forms a dimer in the presence of potassium. Interacts with MTO1; forms the GTPBP3-MTO1 complex composed of homodimers of GTPBP3 and MTO1. The cofactor is K(+).

The protein resides in the mitochondrion. The catalysed reaction is GTP + H2O = GDP + phosphate + H(+). In terms of biological role, GTPase component of the GTPBP3-MTO1 complex that catalyzes the 5-taurinomethyluridine (taum(5)U) modification at the 34th wobble position (U34) of mitochondrial tRNAs (mt-tRNAs), which plays a role in mt-tRNA decoding and mitochondrial translation. Taum(5)U formation on mammalian mt-tRNA requires the presence of both GTPBP3-mediated GTPase activity and MTO1 catalytic activity. The chain is 5-taurinomethyluridine-[tRNA] synthase subunit GTPB3, mitochondrial from Rattus norvegicus (Rat).